The following is a 282-amino-acid chain: Protein GAM-1 (282 aa).

The short motif at 251–260 (SLQDWARLGV) is the BC-box-like element.

In terms of assembly, interacts with host HDAC1. Interacts with host E1-activating enzyme (SAE1/UBA2 heterodimer). Interacts with host retinoblastoma protein. Seems to form a complex with host E4F1 and HDAC1. Seems to form complexes with either CUL2-elongin BC complex-RBX1 or CUL5-elongin BC complex-RBX1. Interacts with TCEB1/Elongin-C, CUL2 and CUL5 in vitro.

The protein localises to the host nucleus. Functionally, early protein essential for viral replication. Strong and global transcriptional activator of both viral and cellular genes. Activates transcription by blocking host retinoblastoma protein (RB) and inhibiting the SUMO pathway. Inhibition of host RB leads to the activation of E2F1-dependent transcription and, in particular, of E2F1-regulated S-phase genes. Stimulation of progression from G1 to S phase allows the virus to efficiently use the cellular DNA replicating machinery to achieve viral genome replication. Blocks the SUMO pathway by targeting the E1 enzyme (SAE1/UBA2 heterodimer) to the ubiquitin-proteasome machinery. Mediates SAE1 degradation possibly through the formation of complexes with either CUL2-elongin BC complex-RBX1 or CUL5-elongin BC complex-RBX1. The degradation of UBA2 is probably a consequent effect of SAE1 disappearance. Inhibits HDAC1 sumoylation, thereby interfering with histone deacetylation mediated by HDAC1, leading to activation of transcription. Mediates induction of heat-shock response. Seems to have an antiapoptotic function. This Galliformes (FAdV-1) protein is Protein GAM-1.